The primary structure comprises 147 residues: Lysozyme C (147 aa).

The signal sequence occupies residues 1–18 (MRSLLILVLCFLPLAALG). A C-type lysozyme domain is found at 19-147 (KVYGRCELAA…VHAWIRGCRL (129 aa)). Cystine bridges form between C24-C145, C48-C133, C82-C98, and C94-C112.

This sequence belongs to the glycosyl hydrolase 22 family. As to quaternary structure, monomer.

The protein resides in the secreted. It carries out the reaction Hydrolysis of (1-&gt;4)-beta-linkages between N-acetylmuramic acid and N-acetyl-D-glucosamine residues in a peptidoglycan and between N-acetyl-D-glucosamine residues in chitodextrins.. In terms of biological role, lysozymes have primarily a bacteriolytic function; those in tissues and body fluids are associated with the monocyte-macrophage system and enhance the activity of immunoagents. This is Lysozyme C (LYZ) from Meleagris gallopavo (Wild turkey).